The following is a 358-amino-acid chain: 4-hydroxy-3-methylbut-2-en-1-yl diphosphate synthase (flavodoxin) (358 aa).

4 residues coordinate [4Fe-4S] cluster: Cys270, Cys273, Cys305, and Glu312.

Belongs to the IspG family. The cofactor is [4Fe-4S] cluster.

The enzyme catalyses (2E)-4-hydroxy-3-methylbut-2-enyl diphosphate + oxidized [flavodoxin] + H2O + 2 H(+) = 2-C-methyl-D-erythritol 2,4-cyclic diphosphate + reduced [flavodoxin]. It participates in isoprenoid biosynthesis; isopentenyl diphosphate biosynthesis via DXP pathway; isopentenyl diphosphate from 1-deoxy-D-xylulose 5-phosphate: step 5/6. In terms of biological role, converts 2C-methyl-D-erythritol 2,4-cyclodiphosphate (ME-2,4cPP) into 1-hydroxy-2-methyl-2-(E)-butenyl 4-diphosphate. This Vesicomyosocius okutanii subsp. Calyptogena okutanii (strain HA) protein is 4-hydroxy-3-methylbut-2-en-1-yl diphosphate synthase (flavodoxin).